Consider the following 1580-residue polypeptide: Adhesion G protein-coupled receptor L3 (1580 aa).

Positions Met1–Gly19 are cleaved as a signal peptide. The Extracellular segment spans residues Gly20–Thr949. The interval Ser23–Ala81 is disordered. Residues Ser103–Val192 enclose the SUEL-type lectin domain. Cystine bridges form between Cys104–Cys134, Cys113–Cys191, Cys146–Cys178, Cys159–Cys165, and Cys203–Cys385. N-linked (GlcNAc...) asparagine glycosylation is present at Asn161. An Olfactomedin-like domain is found at Leu202–Pro461. The interval Tyr317–Glu347 is interaction with FLRT3. Ca(2+) contacts are provided by Asp332, Asn380, Ala381, and Val435. Residues Glu494–Pro540 form a disordered region. A compositionally biased stretch (low complexity) spans Ser496 to Arg521. Positions Ser522 to Ser539 are enriched in polar residues. 6 N-linked (GlcNAc...) asparagine glycosylation sites follow: Asn532, Asn617, Asn827, Asn840, Asn885, and Asn911. The GAIN-B domain occupies Asp756–Lys935. 2 cysteine pairs are disulfide-bonded: Cys886–Cys917 and Cys905–Cys919. Positions Cys886–Lys935 are GPS. The interval Thr923 to Ala939 is stachel. A helical membrane pass occupies residues Trp950–Phe970. At Arg971 to Asn978 the chain is on the cytoplasmic side. A helical membrane pass occupies residues Thr979 to Ile999. Asn1000 carries N-linked (GlcNAc...) asparagine glycosylation. Topologically, residues Asn1000–Ala1007 are extracellular. The chain crosses the membrane as a helical span at residues Cys1008 to Leu1028. Residues Glu1029–Tyr1050 lie on the Cytoplasmic side of the membrane. The helical transmembrane segment at Phe1051–Tyr1071 threads the bilayer. Topologically, residues Arg1072–Phe1088 are extracellular. Residues Ile1089 to Ile1109 traverse the membrane as a helical segment. At Ala1110–Ser1142 the chain is on the cytoplasmic side. The chain crosses the membrane as a helical span at residues Trp1143–Met1163. At Tyr1164–Thr1169 the chain is on the extracellular side. Asn1166 is a glycosylation site (N-linked (GlcNAc...) asparagine). The helical transmembrane segment at Val1170–Phe1190 threads the bilayer. Residues His1191 to Leu1580 lie on the Cytoplasmic side of the membrane. The disordered stretch occupies residues Gly1213–Ser1238. Phosphoserine is present on Ser1254. Residues Phe1555–Leu1580 form a disordered region. Residues His1575–Leu1580 carry the PDZ-binding motif.

Belongs to the G-protein coupled receptor 2 family. LN-TM7 subfamily. As to quaternary structure, heterodimer of 2 chains generated by proteolytic processing; the large extracellular N-terminal fragment and the membrane-bound C-terminal fragment predominantly remain associated and non-covalently linked. Interacts (via olfactomedin-like domain) with FLRT1 (via extracellular domain). Interacts (via olfactomedin-like domain) with FLRT2 (via extracellular domain). Interacts (via olfactomedin-like domain) with FLRT3 (via extracellular domain); the interaction is direct. Interacts (via extracellular domain) with TENM1. Interacts (via extracellular domain) with TENM2. Interacts (via extracellular domain) with TENM3. Identified in a complex with FLRT3 and UNC5B; does not interact with UNC5B by itself. Identified in a complex with FLRT3 and UNC5D; does not interact with UNC5D by itself. Interacts (via PDZ-binding motif) with SHANK3. Interacts (via PDZ-binding motif) with DLG4. In terms of processing, autoproteolytically processed at the GPS region of the GAIN-B domain; this cleavage modulates receptor activity. As to expression, brain-specific distribution but low levels are also detected in lung and spleen.

The protein resides in the cell membrane. Its subcellular location is the postsynaptic cell membrane. It localises to the cell projection. It is found in the axon. The protein localises to the cell junction. Its activity is regulated as follows. Forms a heterodimer of 2 chains generated by proteolytic processing that remain associated through non-covalent interactions mediated by the GAIN-B domain. In the inactivated receptor, the Stachel sequence (also named stalk) is embedded in the GAIN-B domain, where it adopts a beta-strand conformation. On activation, the Stachel moves into the 7 transmembrane region and adopts a twisted hook-shaped configuration that forms contacts within the receptor, leading to coupling of a G-alpha protein, which activates signaling. The cleaved GAIN-B and N-terminal domains can then dissociate from the rest of the receptor. Its function is as follows. Orphan adhesion G-protein coupled receptor (aGPCR), which mediates synapse specificity. Ligand binding causes a conformation change that triggers signaling via guanine nucleotide-binding proteins (G proteins) and modulates the activity of downstream effectors. ADGRL3 is coupled with different classes of G alpha proteins, such as G(12)/G(13), G(s), G(i) or G(q), depending on the context. Coupling to G(12)/G(13) G proteins, which mediates the activation Rho small GTPases is the most efficient. Following G-protein coupled receptor activation, associates with cell adhesion molecules that are expressed at the surface of adjacent cells to direct synapse specificity. Specifically mediates the establishment of Schaffer-collateral synapses formed by CA3-region axons on CA1-region pyramidal neurons in the hippocampus. Localizes to postsynaptic spines in excitatory synapses in the S.oriens and S.radiatum and interacts with presynaptic cell adhesion molecules FLRT3 and TENM2, promoting synapse formation. Plays a role in the development of glutamatergic synapses in the cortex. Important in determining the connectivity rates between the principal neurons in the cortex. Orphan adhesion G-protein coupled receptor (aGPCR), which mediates synapse specificity. Ligand binding causes a conformation change that triggers signaling via guanine nucleotide-binding proteins (G proteins) and modulates the activity of downstream effectors, such as adenylate cyclase. Isoform 1 is specifically coupled to G(s) G proteins and mediates activation of adenylate cyclase activity. Following G-protein coupled receptor activation, undergoes liquid-liquid phase transition, associates with (1) cell adhesion molecules that are expressed at the surface of adjacent cells, as well as (2) PDZ-containing proteins, such as SHANK3 and DLG4, in the cytoplasm to direct synapse formation. This is Adhesion G protein-coupled receptor L3 from Bos taurus (Bovine).